A 649-amino-acid chain; its full sequence is Lysophospholipase (649 aa).

The first 21 residues, 1–21 (MNLKEWLLFSDAVFFAQGTLA), serve as a signal peptide directing secretion. Asn-32, Asn-51, Asn-77, Asn-90, Asn-121, Asn-158, Asn-168, Asn-213, Asn-275, Asn-343, Asn-386, Asn-457, Asn-487, Asn-511, Asn-539, Asn-563, and Asn-580 each carry an N-linked (GlcNAc...) asparagine glycan. The 551-residue stretch at 34–584 (SCDEDINLIR…TNYCWNGTID (551 aa)) folds into the PLA2c domain.

The protein belongs to the lysophospholipase family.

Its subcellular location is the secreted. It catalyses the reaction a 1-acyl-sn-glycero-3-phosphocholine + H2O = sn-glycerol 3-phosphocholine + a fatty acid + H(+). Its function is as follows. Catalyzes the release of fatty acids from lysophospholipids. The chain is Lysophospholipase from Torulaspora delbrueckii (Yeast).